The primary structure comprises 157 residues: 6,7-dimethyl-8-ribityllumazine synthase (157 aa).

Residues Phe22, 56–58 (AME), and 80–82 (AVV) contribute to the 5-amino-6-(D-ribitylamino)uracil site. Residue 85-86 (ET) participates in (2S)-2-hydroxy-3-oxobutyl phosphate binding. His88 acts as the Proton donor in catalysis. Residue Phe113 coordinates 5-amino-6-(D-ribitylamino)uracil. Arg127 contacts (2S)-2-hydroxy-3-oxobutyl phosphate.

The protein belongs to the DMRL synthase family.

It catalyses the reaction (2S)-2-hydroxy-3-oxobutyl phosphate + 5-amino-6-(D-ribitylamino)uracil = 6,7-dimethyl-8-(1-D-ribityl)lumazine + phosphate + 2 H2O + H(+). The protein operates within cofactor biosynthesis; riboflavin biosynthesis; riboflavin from 2-hydroxy-3-oxobutyl phosphate and 5-amino-6-(D-ribitylamino)uracil: step 1/2. Functionally, catalyzes the formation of 6,7-dimethyl-8-ribityllumazine by condensation of 5-amino-6-(D-ribitylamino)uracil with 3,4-dihydroxy-2-butanone 4-phosphate. This is the penultimate step in the biosynthesis of riboflavin. The polypeptide is 6,7-dimethyl-8-ribityllumazine synthase (Levilactobacillus brevis (strain ATCC 367 / BCRC 12310 / CIP 105137 / JCM 1170 / LMG 11437 / NCIMB 947 / NCTC 947) (Lactobacillus brevis)).